A 707-amino-acid chain; its full sequence is NAD(P)H-quinone oxidoreductase subunit 5, chloroplastic (707 aa).

15 helical membrane passes run 9–29 (WIIPFVPLPIPILIGIGLLLF), 40–60 (WAFPNILLLSIVMIFSIDLSI), 89–109 (IDSLTSIMSILITTVGIFVLI), 125–145 (FAYMSLFNTSMLGLVTSSNLI), 147–167 (IYIFWELVGMCSYLLIGFWFT), 184–204 (IGDFGLLLGILGFYWITGSFE), 219–239 (NEVHLLFVTLCASLLFAGAVA), 258–278 (TPISALIHAATMVATGIFLVA), 280–300 (LLPLFIVIPYIMNLISLIGII), 327–347 (LGYMMLALGMGSYRAALFHLI), 354–374 (ALLFLGSGSIIHSMEAVVGYS), 396–416 (IAFLIGTLSLCGIPPLACFWS), 425–445 (WLYSPIFAIIAWSTAGLTAFY), 538–558 (LFPMLILVLFTLFVGAIAIPL), and 592–612 (FLTNATFSVSIAGFGIFTAFL).

Belongs to the complex I subunit 5 family. As to quaternary structure, NDH is composed of at least 16 different subunits, 5 of which are encoded in the nucleus.

It localises to the plastid. Its subcellular location is the chloroplast thylakoid membrane. The enzyme catalyses a plastoquinone + NADH + (n+1) H(+)(in) = a plastoquinol + NAD(+) + n H(+)(out). It carries out the reaction a plastoquinone + NADPH + (n+1) H(+)(in) = a plastoquinol + NADP(+) + n H(+)(out). Functionally, NDH shuttles electrons from NAD(P)H:plastoquinone, via FMN and iron-sulfur (Fe-S) centers, to quinones in the photosynthetic chain and possibly in a chloroplast respiratory chain. The immediate electron acceptor for the enzyme in this species is believed to be plastoquinone. Couples the redox reaction to proton translocation, and thus conserves the redox energy in a proton gradient. This is NAD(P)H-quinone oxidoreductase subunit 5, chloroplastic (ndhF) from Malvaviscus arboreus (Turk's cap).